A 208-amino-acid chain; its full sequence is Large ribosomal subunit protein bL25 (208 aa).

The protein belongs to the bacterial ribosomal protein bL25 family. CTC subfamily. Part of the 50S ribosomal subunit; part of the 5S rRNA/L5/L18/L25 subcomplex. Contacts the 5S rRNA. Binds to the 5S rRNA independently of L5 and L18.

This is one of the proteins that binds to the 5S RNA in the ribosome where it forms part of the central protuberance. The protein is Large ribosomal subunit protein bL25 of Acidovorax ebreus (strain TPSY) (Diaphorobacter sp. (strain TPSY)).